Consider the following 449-residue polypeptide: Capsid protein (449 aa).

The DNA-binding stretch occupies residues 1–43; the sequence is MARRARRPRGRFYSFRRGRWHHLKRLRRRYKFRHRRRQRYRRR. Residues 6-47 form a nuclear localization signals region; sequence RRPRGRFYSFRRGRWHHLKRLRRRYKFRHRRRQRYRRRAFRK.

The protein belongs to the gyrovirus capsid protein family. In terms of assembly, homomultimer (Potential). Interacts with Rep; this interaction relocates Rep into the nucleus.

It localises to the host nucleus. It is found in the virion. In terms of biological role, self-assembles to form the virion icosahedral capsid with a T=1 symmetry. This very small capsid (25 nm in diameter) allows the virus to be very stable in the environment and resistant to some disinfectants, including detergents. Essential for the initial attachment to host receptors. After attachment, the virus is endocytosed and traffics to the nucleus. The capsid protein binds and transports the viral genome and Rep across the nuclear envelope. The sequence is that of Capsid protein (VP1) from Gallus gallus (Chicken).